Here is a 729-residue protein sequence, read N- to C-terminus: Catalase-peroxidase (729 aa).

Residues 1–33 (MSAHNTNESAVGKCPFHEQKEEKSVLARGAGGG) form a disordered region. The span at 15–25 (PFHEQKEEKSV) shows a compositional bias: basic and acidic residues. Residues 108–229 (WHSAGTYRTV…LGATEMGLIY (122 aa)) constitute a cross-link (tryptophyl-tyrosyl-methioninium (Trp-Tyr) (with M-255)). His109 (proton acceptor) is an active-site residue. Positions 229–255 (YVNPEGPEASGNPASAAPAIRATFGNM) form a cross-link, tryptophyl-tyrosyl-methioninium (Tyr-Met) (with W-108). His270 contacts heme b.

It belongs to the peroxidase family. Peroxidase/catalase subfamily. Homodimer or homotetramer. It depends on heme b as a cofactor. Post-translationally, formation of the three residue Trp-Tyr-Met cross-link is important for the catalase, but not the peroxidase activity of the enzyme.

It catalyses the reaction H2O2 + AH2 = A + 2 H2O. It carries out the reaction 2 H2O2 = O2 + 2 H2O. In terms of biological role, bifunctional enzyme with both catalase and broad-spectrum peroxidase activity. In Erwinia tasmaniensis (strain DSM 17950 / CFBP 7177 / CIP 109463 / NCPPB 4357 / Et1/99), this protein is Catalase-peroxidase.